We begin with the raw amino-acid sequence, 2543 residues long: Polyketide synthase PksR (2543 aa).

A methyltransferase region spans residues leucine 165–leucine 269. Residues serine 376–histidine 452 enclose the Carrier 1 domain. Serine 413 is subject to O-(pantetheine 4'-phosphoryl)serine. The segment at threonine 465–phenylalanine 485 is disordered. One can recognise a Ketosynthase family 3 (KS3) 1 domain in the interval threonine 527 to glutamate 959. Residue cysteine 700 is the For beta-ketoacyl synthase 1 activity of the active site. The N-terminal hotdog fold stretch occupies residues histidine 1114–proline 1242. The 284-residue stretch at histidine 1114–arginine 1397 folds into the PKS/mFAS DH domain. Residues threonine 1255 to arginine 1397 are C-terminal hotdog fold. In terms of domain architecture, Carrier 2 spans serine 1407–histidine 1485. Serine 1445 carries the O-(pantetheine 4'-phosphoryl)serine modification. A Ketosynthase family 3 (KS3) 2 domain is found at alanine 1528 to glutamate 1946. Catalysis depends on for beta-ketoacyl synthase 2 activity residues cysteine 1680, histidine 1815, and histidine 1862. Residues arginine 2134 to glutamine 2208 form the Carrier 3 domain. Serine 2168 bears the O-(pantetheine 4'-phosphoryl)serine mark. A thioesterase region spans residues arginine 2234–arginine 2514.

Pantetheine 4'-phosphate is required as a cofactor.

The protein localises to the cytoplasm. It participates in antibiotic biosynthesis; bacillaene biosynthesis. Involved in some intermediate steps for the synthesis of the antibiotic polyketide bacillaene which is involved in secondary metabolism. This chain is Polyketide synthase PksR (pksR), found in Bacillus subtilis (strain 168).